The following is a 412-amino-acid chain: COP9 signalosome complex subunit 4 (412 aa).

The PCI domain maps to Glu-216–Pro-378.

Belongs to the CSN4 family. As to quaternary structure, component of the CSN complex, probably composed of csn-1, csn-2, csn-3, csn-4, csn-5, csn-6 and csn-7. Within the complex it probably interacts directly with csn-2 and csn-4. In the complex, it probably interacts directly with csn-1, csn-2, csn-3 and csn-6. Interacts with itself.

It localises to the cytoplasm. It is found in the nucleus. Component of the COP9 signalosome complex (CSN), a complex involved in various cellular and developmental processes. The CSN complex is an essential regulator of the ubiquitin (Ubl) conjugation pathway by mediating the deneddylation of the cullin subunits of the SCF-type E3 ligase complexes, leading to decrease the Ubl ligase activity of SCF. The CSN complex plays an essential role in embryogenesis and oogenesis and is required to regulate microtubule stability in the early embryo. Mediates mei-3/katanin targeting for degradation at the meiosis to mitosis transition via deneddylation of cul-3. The sequence is that of COP9 signalosome complex subunit 4 (csn-4) from Caenorhabditis elegans.